We begin with the raw amino-acid sequence, 288 residues long: MKQTRNFDEWLSTMTDTVADWTYYTDFPKVYKNVSSIKVALNIMNSLIGSKNIQEDFLDLYQNYPEILKVVPLLIAKRLRDTIIVKDPIKDFYFDFSKRNYSIEEYTMFLEKSGIFDLLQNHLVSNLVDYVTGVEVGMDTNGRKNRTGDAMENIVQSYLEAEGYILGENLFKEIEQNEIEEIFSVDLSAITNDGNTVKRFDFVIKNEQVLYLIEVNFYSGSGSKLNETARSYKMIAEETKAIPNVEFMWITDGQGWYKAKNNLRETFDILPFLYNINDLEHNILKNLK.

The protein belongs to the DpnII type II restriction endonuclease family. In terms of assembly, homodimer.

The enzyme catalyses Endonucleolytic cleavage of DNA to give specific double-stranded fragments with terminal 5'-phosphates.. A P subtype restriction enzyme that recognizes the double-stranded unmethylated sequence 5'-GATC-3' and cleaves before G-1. This Streptococcus pneumoniae protein is Type II restriction enzyme DpnII.